Here is a 306-residue protein sequence, read N- to C-terminus: Putative transcriptional regulator (306 aa).

Residues 1–61 (MIKRNLNDLL…TRTTRSVSPT (61 aa)) form the HTH lysR-type domain. Positions 21–40 (FTRAAAQLGVTQSALSQSIS) form a DNA-binding region, H-T-H motif.

The protein belongs to the LysR transcriptional regulatory family.

In terms of biological role, may have a role in the regulation of oprD expression. This chain is Putative transcriptional regulator, found in Pseudomonas aeruginosa (strain ATCC 15692 / DSM 22644 / CIP 104116 / JCM 14847 / LMG 12228 / 1C / PRS 101 / PAO1).